Here is a 205-residue protein sequence, read N- to C-terminus: Large ribosomal subunit protein bL25A (205 aa).

It belongs to the bacterial ribosomal protein bL25 family. CTC subfamily. As to quaternary structure, part of the 50S ribosomal subunit; part of the 5S rRNA/L5/L18/L25 subcomplex. Contacts the 5S rRNA. Binds to the 5S rRNA independently of L5 and L18.

Its function is as follows. This is one of the proteins that binds to the 5S RNA in the ribosome where it forms part of the central protuberance. This chain is Large ribosomal subunit protein bL25A, found in Symbiobacterium thermophilum (strain DSM 24528 / JCM 14929 / IAM 14863 / T).